The chain runs to 715 residues: Polyribonucleotide nucleotidyltransferase (715 aa).

2 residues coordinate Mg(2+): Asp485 and Asp491. A KH domain is found at 552 to 611; the sequence is PRIHTMKIDPKKIKDVIGKGGAVIRALTEETGTSIDIDDDGTVKIAATDNNAAKAVMARI. Residues 621–689 form the S1 motif domain; that stretch reads NAIYKGKVTR…RQNRIRLTMK (69 aa). Positions 695–715 are disordered; that stretch reads TPVAENVTEEAEVSSEQQAEI.

This sequence belongs to the polyribonucleotide nucleotidyltransferase family. As to quaternary structure, component of the RNA degradosome, which is a multiprotein complex involved in RNA processing and mRNA degradation. The cofactor is Mg(2+).

The protein resides in the cytoplasm. The catalysed reaction is RNA(n+1) + phosphate = RNA(n) + a ribonucleoside 5'-diphosphate. Its function is as follows. Involved in mRNA degradation. Catalyzes the phosphorolysis of single-stranded polyribonucleotides processively in the 3'- to 5'-direction. The sequence is that of Polyribonucleotide nucleotidyltransferase from Actinobacillus pleuropneumoniae serotype 3 (strain JL03).